A 165-amino-acid polypeptide reads, in one-letter code: Putative TRAP transporter small permease protein HI_0051 (165 aa).

A run of 4 helical transmembrane segments spans residues 20 to 40 (LEYL…FNSV), 51 to 71 (FSEE…IILV), 94 to 114 (IVLI…AYGA), and 136 to 156 (LYLA…FSMI).

It belongs to the TRAP transporter small permease family.

The protein resides in the cell inner membrane. The chain is Putative TRAP transporter small permease protein HI_0051 from Haemophilus influenzae (strain ATCC 51907 / DSM 11121 / KW20 / Rd).